A 176-amino-acid polypeptide reads, in one-letter code: ATP synthase subunit delta (176 aa).

This sequence belongs to the ATPase delta chain family. As to quaternary structure, F-type ATPases have 2 components, F(1) - the catalytic core - and F(0) - the membrane proton channel. F(1) has five subunits: alpha(3), beta(3), gamma(1), delta(1), epsilon(1). F(0) has three main subunits: a(1), b(2) and c(10-14). The alpha and beta chains form an alternating ring which encloses part of the gamma chain. F(1) is attached to F(0) by a central stalk formed by the gamma and epsilon chains, while a peripheral stalk is formed by the delta and b chains.

It localises to the cell inner membrane. Functionally, f(1)F(0) ATP synthase produces ATP from ADP in the presence of a proton or sodium gradient. F-type ATPases consist of two structural domains, F(1) containing the extramembraneous catalytic core and F(0) containing the membrane proton channel, linked together by a central stalk and a peripheral stalk. During catalysis, ATP synthesis in the catalytic domain of F(1) is coupled via a rotary mechanism of the central stalk subunits to proton translocation. Its function is as follows. This protein is part of the stalk that links CF(0) to CF(1). It either transmits conformational changes from CF(0) to CF(1) or is implicated in proton conduction. The protein is ATP synthase subunit delta of Nitratiruptor sp. (strain SB155-2).